A 287-amino-acid polypeptide reads, in one-letter code: MTFTGQAYALGAGTVINAIATWKGAAFGVDLKTFADVELTKESSSFIGTIEGVPHGDTTLIERSMDLVLEHFGIEMGGTVVTRSEVPLASGLKSSSAAANATILATLDALGETLEPLDAVKMGVRAAKDAGVTITGAFDDACASFFGGIVVTDNRTNELVKRTEKEMDVVIFAPDRQSFSSQTNVHNSELLAPWVDMAYDLALDGEYEKAMTLNGFLYCGALGFSTDVMMEALKCGVKGVSLSGTGPAYSALVDRKMADTLTKVWENLGTSGKVINTKINNDGLTKL.

P87–A97 is a binding site for ATP.

Belongs to the GHMP kinase family. Archaeal shikimate kinase subfamily.

The protein localises to the cytoplasm. It carries out the reaction shikimate + ATP = 3-phosphoshikimate + ADP + H(+). The protein operates within metabolic intermediate biosynthesis; chorismate biosynthesis; chorismate from D-erythrose 4-phosphate and phosphoenolpyruvate: step 5/7. This is Shikimate kinase from Methanococcoides burtonii (strain DSM 6242 / NBRC 107633 / OCM 468 / ACE-M).